Here is a 1336-residue protein sequence, read N- to C-terminus: pre-mRNA 3' end processing protein WDR33 (1336 aa).

A2 is modified (N-acetylalanine). Residue S7 is modified to Phosphoserine. N6-acetyllysine is present on K46. 7 WD repeats span residues K117–I156, A159–F198, A200–I239, G242–T283, A286–Q325, G329–G369, and A373–R412. Glycyl lysine isopeptide (Lys-Gly) (interchain with G-Cter in SUMO2) cross-links involve residues K526, K530, and K560. A disordered region spans residues Q568–R1336. Positions Q573–G590 are enriched in pro residues. Polar residues predominate over residues M594 to S607. Positions Q608 to H643 are enriched in low complexity. A Collagen-like domain is found at G618–P770. A compositionally biased stretch (pro residues) spans P683–P695. Low complexity-rich tracts occupy residues Q696–P707 and Q726–G751. R782 carries the post-translational modification Omega-N-methylarginine. A compositionally biased stretch (low complexity) spans G854–L869. Residue R915 is modified to Asymmetric dimethylarginine. The segment covering P932–G941 has biased composition (low complexity). Basic and acidic residues-rich tracts occupy residues S971 to P989 and G998 to G1034. At R987 the chain carries Omega-N-methylarginine. The residue at position 1035 (R1035) is an Omega-N-methylarginine. Basic and acidic residues-rich tracts occupy residues P1056–G1068 and E1078–D1122. Over residues F1130–E1140 the composition is skewed to acidic residues. Over residues E1141–G1150 the composition is skewed to basic and acidic residues. A compositionally biased stretch (basic residues) spans R1151 to R1160. Composition is skewed to basic and acidic residues over residues E1169–S1217 and S1242–G1259. S1210 bears the Phosphoserine mark. R1262 is modified (omega-N-methylarginine). A compositionally biased stretch (basic and acidic residues) spans D1281–P1293. Residues G1301–R1326 are compositionally biased toward low complexity. R1315 bears the Asymmetric dimethylarginine; alternate mark. R1315 bears the Omega-N-methylarginine; alternate mark.

This sequence belongs to the WD repeat WDR33 family. Component of the cleavage and polyadenylation specificity factor (CPSF) module of the pre-mRNA 3'-end processing complex. Interacts with CPSF3/CPSF73. As to expression, most highly expressed in testis.

Its subcellular location is the nucleus. Its function is as follows. Essential for both cleavage and polyadenylation of pre-mRNA 3' ends. The protein is pre-mRNA 3' end processing protein WDR33 (WDR33) of Homo sapiens (Human).